The sequence spans 512 residues: MSQTEEKKGIGRRVQAFGSFLSSMIMPNIGAFIAWGFIAAIFIDNGWLPNKDLATLAGPMITYLIPLLIAFSGGRLIYDLRGGIIAATATMGVIVALPDTPMLLGAMIMGPLVGWLMKKTDQLIQPRTPQGFEMLFNNFSAGILGFIMTIAGFKILAPLMKFIMHILSVAVEALVHAHLLPLVSILVEPAKIVFLNNAINHGVFTPLGADQAAKAGQSILYTIESNPGPGLGILLAYMIFGKGTAKTTSYGAGIIHFLGGIHEIYFPYVLMRPLLFIAVILGGMTGVATYQATGFGFKSPASPGSFIVYCLNAPRGEFLHMLLGVFLAALVSFVVAALIMKFTREPKQDLEAATAQMENTKGKKSSVASKLVSSDKNVNTEENASGNVSETSSSDDDPEALLDNYNTEDVDAHNYNNINHVIFACDAGMGSSAMGASMLRNKFKKAGINDITVTNTAINQLPKDAQLVITQKKLTDRAIKQTPNAIHISVDNFLNSPRYEELLNNLKKDDQA.

Topologically, residues 1–28 (MSQTEEKKGIGRRVQAFGSFLSSMIMPN) are cytoplasmic. The region spanning 17–349 (FGSFLSSMIM…MKFTREPKQD (333 aa)) is the PTS EIIC type-2 domain. A helical transmembrane segment spans residues 29–50 (IGAFIAWGFIAAIFIDNGWLPN). Residues 51–54 (KDLA) are Extracellular-facing. Residues 55–75 (TLAGPMITYLIPLLIAFSGGR) form a helical membrane-spanning segment. Topologically, residues 76–139 (LIYDLRGGII…QGFEMLFNNF (64 aa)) are cytoplasmic. The chain crosses the membrane as a helical span at residues 140–161 (SAGILGFIMTIAGFKILAPLMK). Topologically, residues 162–170 (FIMHILSVA) are extracellular. The chain crosses the membrane as a helical span at residues 171 to 191 (VEALVHAHLLPLVSILVEPAK). Residues 192–278 (IVFLNNAINH…VLMRPLLFIA (87 aa)) lie on the Cytoplasmic side of the membrane. The chain crosses the membrane as a helical span at residues 279–298 (VILGGMTGVATYQATGFGFK). Topologically, residues 299–318 (SPASPGSFIVYCLNAPRGEF) are extracellular. Residues 319 to 340 (LHMLLGVFLAALVSFVVAALIM) form a helical membrane-spanning segment. The Cytoplasmic portion of the chain corresponds to 341–512 (KFTREPKQDL…LNNLKKDDQA (172 aa)). Residues 355-402 (AQMENTKGKKSSVASKLVSSDKNVNTEENASGNVSETSSSDDDPEALL) form a disordered region. Over residues 365–376 (SSVASKLVSSDK) the composition is skewed to low complexity. Over residues 380 to 392 (TEENASGNVSETS) the composition is skewed to polar residues. The region spanning 419-512 (NHVIFACDAG…LNNLKKDDQA (94 aa)) is the PTS EIIB type-2 domain. Catalysis depends on C425, which acts as the Phosphocysteine intermediate; for EIIB activity. Position 425 is a phosphocysteine; by EIIA (C425).

Homodimer.

The protein resides in the cell membrane. The enzyme catalyses D-mannitol(out) + N(pros)-phospho-L-histidyl-[protein] = D-mannitol 1-phosphate(in) + L-histidyl-[protein]. In terms of biological role, the phosphoenolpyruvate-dependent sugar phosphotransferase system (sugar PTS), a major carbohydrate active transport system, catalyzes the phosphorylation of incoming sugar substrates concomitantly with their translocation across the cell membrane. The enzyme II CmtAB PTS system is involved in D-mannitol transport. This chain is PTS system mannitol-specific EIICB component (mtlA), found in Staphylococcus aureus (strain COL).